Here is a 377-residue protein sequence, read N- to C-terminus: Protein RecA (377 aa).

76–83 (GPESSGKT) contacts ATP. The disordered stretch occupies residues 346 to 377 (TNGNNGEDHEGTEPVEIEAEDAAPKKGKKGKH).

This sequence belongs to the RecA family.

The protein resides in the cytoplasm. Can catalyze the hydrolysis of ATP in the presence of single-stranded DNA, the ATP-dependent uptake of single-stranded DNA by duplex DNA, and the ATP-dependent hybridization of homologous single-stranded DNAs. It interacts with LexA causing its activation and leading to its autocatalytic cleavage. The sequence is that of Protein RecA from Bdellovibrio bacteriovorus (strain ATCC 15356 / DSM 50701 / NCIMB 9529 / HD100).